Here is a 426-residue protein sequence, read N- to C-terminus: tRNA(Ile)-lysidine synthase (426 aa).

19 to 24 (SGGLDS) lines the ATP pocket.

It belongs to the tRNA(Ile)-lysidine synthase family.

The protein localises to the cytoplasm. It carries out the reaction cytidine(34) in tRNA(Ile2) + L-lysine + ATP = lysidine(34) in tRNA(Ile2) + AMP + diphosphate + H(+). Ligates lysine onto the cytidine present at position 34 of the AUA codon-specific tRNA(Ile) that contains the anticodon CAU, in an ATP-dependent manner. Cytidine is converted to lysidine, thus changing the amino acid specificity of the tRNA from methionine to isoleucine. This is tRNA(Ile)-lysidine synthase from Neisseria meningitidis serogroup A / serotype 4A (strain DSM 15465 / Z2491).